The following is a 302-amino-acid chain: MNRTVKVAILGSGNIGTDLMYKILKKRWVLELSMIAGIDPQSEGLARARAEGVYATAGGIDAILEDPEIKIVFDATSAKAHLKHAKRLKEAGKVAIDLTPAAVGPYVVPPVNLMEHVDKDNVNLITCGGQATIPLVYAVSRVANVKYAEMVSTVSSSSAGPGTRQNIDEFTFTTSRGLEVIGGAEKGKAIIILNPAKPPILMRNTVYIAYEDGDDHQIRHSIGQMIHDVQQYVPGYRLKGEPIFDRRETPKGRLDVVILLLEVEGAGDFLPVSAGNLDIMTASAKQVGEVIAKRLIEMTSTA.

12–15 (SGNI) contacts NAD(+). Catalysis depends on Cys-127, which acts as the Acyl-thioester intermediate. NAD(+)-binding positions include 158-166 (SAGPGTRQN) and Asn-276.

This sequence belongs to the acetaldehyde dehydrogenase family.

It catalyses the reaction acetaldehyde + NAD(+) + CoA = acetyl-CoA + NADH + H(+). In Geobacillus genomosp. 3, this protein is Acetaldehyde dehydrogenase (nahO).